Consider the following 188-residue polypeptide: Elongation factor P-like protein (188 aa).

The protein belongs to the elongation factor P family.

The sequence is that of Elongation factor P-like protein from Stenotrophomonas maltophilia (strain R551-3).